The sequence spans 240 residues: Penton protein H240R (240 aa).

The protein belongs to the asfivirus H240R family.

The protein localises to the virion. Forms the penton at the fivefold vertices of the icosahedral capsid. Together with the minor capsid proteins (p17, p49, and M1249L), forms a complicated network immediately below the outer capsid shell, stabilizing the whole capsid. The polypeptide is Penton protein H240R (African swine fever virus (isolate Tick/South Africa/Pretoriuskop Pr4/1996) (ASFV)).